A 293-amino-acid chain; its full sequence is 4-diphosphocytidyl-2-C-methyl-D-erythritol kinase (293 aa).

K16 is a catalytic residue. 99–109 is a binding site for ATP; it reads PMGAGLGGGSS. Residue D141 is part of the active site.

This sequence belongs to the GHMP kinase family. IspE subfamily.

It catalyses the reaction 4-CDP-2-C-methyl-D-erythritol + ATP = 4-CDP-2-C-methyl-D-erythritol 2-phosphate + ADP + H(+). It functions in the pathway isoprenoid biosynthesis; isopentenyl diphosphate biosynthesis via DXP pathway; isopentenyl diphosphate from 1-deoxy-D-xylulose 5-phosphate: step 3/6. In terms of biological role, catalyzes the phosphorylation of the position 2 hydroxy group of 4-diphosphocytidyl-2C-methyl-D-erythritol. The protein is 4-diphosphocytidyl-2-C-methyl-D-erythritol kinase of Burkholderia cenocepacia (strain ATCC BAA-245 / DSM 16553 / LMG 16656 / NCTC 13227 / J2315 / CF5610) (Burkholderia cepacia (strain J2315)).